Consider the following 136-residue polypeptide: VSQADIAAVQTSWRRCYCSWDNEDGLKFYQTLFDSNSKIRHAFESAGATNDTEMEKQANLFGLMMTQFIDNLDDTTALNYKISGLMATHKTRNVVDPALFAIALNELVKFIGNQQPAWKNVTAVILSQMKIALSSN.

Residues 1–134 (VSQADIAAVQ…ILSQMKIALS (134 aa)) form the Globin domain. Position 89 (His89) interacts with heme b.

It belongs to the globin family. As to quaternary structure, homodimer.

This Phreagena soyoae (Deep-sea cold-seep clam) protein is Globin-2.